The chain runs to 706 residues: MRLLHPLIPASLLLTLTSATLHTSQTNTTITLTNNRLTANFSKSQGRITDLYLDNQDLLGPQSGDTGVGPYLDCYCIPSGFYTPGSTSPTLQLFTGTDKSGTSYAGVLMDETYPPTGQHFQQYWFLRDGETGLHTFSRLAYYNETTPYLRNLQEFRTLFRPNTELWTHLSSSEVQTAPLPSKKAVEEEVVVQDATWTFNNTPTDEYYVQFADYFTKYTFSNAWRDNSVHGMYADGSTSNGSTFGAWLVMNTKDTYYGGPLHSDLTVDGIVYNYLVSNHHGEGTPNITYGFDRTFGPQYYHFNGGKGSTASLQELKSDAETLADPSWNVDFYDSIAKHVVGYTPSSQRGSVQGKIKLPKGATRPIAVLTVDGQYFQDNSVNSSSYQYWAEIDDSGHFSVDHVKEGPYRLTVYADGIFGDFVRDGVQVKAGKKTTIQETWEAESAGTEIWRLGTPDKSSGEFRHGVARDPTHPLHPPEYLIYWGAYDWQSDFPDGINYTIGTSDPATDLNTVHWSVFGPTPNDPRVEYDTTHDWTINFPLSEDDLAERSKATLTIQLAGAKAASGNTDVYNASEPYTNLALESYINDQAEPLTLLIGFNQSSSCIVRSAVSCYQVRSRMEFPADWLKVGNNVLTLHLPYNATDTETAILPATVTGRLILPPQPIYGQTPVILSVIGSEKLEPLPAASILIFEIIRHQSEPLWSVPRSA.

The first 19 residues, 1 to 19, serve as a signal peptide directing secretion; sequence MRLLHPLIPASLLLTLTSA. 10 N-linked (GlcNAc...) asparagine glycosylation sites follow: asparagine 27, asparagine 40, asparagine 143, asparagine 239, asparagine 285, asparagine 380, asparagine 495, asparagine 569, asparagine 597, and asparagine 638.

Belongs to the polysaccharide lyase 4 family.

The protein resides in the secreted. The enzyme catalyses Endotype eliminative cleavage of L-alpha-rhamnopyranosyl-(1-&gt;4)-alpha-D-galactopyranosyluronic acid bonds of rhamnogalacturonan I domains in ramified hairy regions of pectin leaving L-rhamnopyranose at the reducing end and 4-deoxy-4,5-unsaturated D-galactopyranosyluronic acid at the non-reducing end.. Its function is as follows. Pectinolytic enzymes consist of four classes of enzymes: pectin lyase, polygalacturonase, pectin methylesterase and rhamnogalacturonase. Degrades the rhamnogalacturonan I (RG-I) backbone of pectin. The chain is Probable rhamnogalacturonate lyase B (rglB) from Aspergillus niger (strain ATCC MYA-4892 / CBS 513.88 / FGSC A1513).